We begin with the raw amino-acid sequence, 333 residues long: MVGLVFVGMDHGTTGVSFTILGDDAEHFKIGREDLSTGRASALDELKDRVPLNEIDLMAITYAMGDAISTIKPIERVKNRGIISIGGAGKVTGGGTAVYSEIESSGIPTLLIPGLHRNTPCLDERFRAAYSHHASPEKVSICYNAYLETGWENMIVSDISSNTVTMLIQDGRIVGAMDACVGAMGVIHGPLDLEMLRKIDDGEKTANECFSHAGAVKIAGIDTKVSRAREELLEMYRAGRDEARLALDTMMMTIAMEIWGLAGISSGIDGIVLTGSVGAMREPYDFHGKLKDMVKEIADVRCTDSHLRLHGKCQIARDIYNGKREILGIEVEV.

It belongs to the UPF0285 family.

The protein is UPF0285 protein MTH_1441 of Methanothermobacter thermautotrophicus (strain ATCC 29096 / DSM 1053 / JCM 10044 / NBRC 100330 / Delta H) (Methanobacterium thermoautotrophicum).